Consider the following 78-residue polypeptide: Large ribosomal subunit protein bL28 (78 aa).

The disordered stretch occupies residues 1–21 (MSRVCQVTGKKPMVGNNRSHA).

Belongs to the bacterial ribosomal protein bL28 family.

The sequence is that of Large ribosomal subunit protein bL28 from Shewanella woodyi (strain ATCC 51908 / MS32).